Consider the following 789-residue polypeptide: E3 UFM1-protein ligase 1 (789 aa).

Residues 2 to 212 are required for E3 UFM1-protein ligase activity; it reads AADWEEIRRL…VSNLITRYGF (211 aa). Disordered regions lie at residues 407 to 470 and 743 to 763; these read LENS…TGRN and SKKAEQEDDNKTEEEEGADTI. Residues 444–453 show a composition bias toward basic residues; the sequence is KIKKTKKKGR. The span at 748-760 shows a compositional bias: acidic residues; the sequence is QEDDNKTEEEEGA.

This sequence belongs to the UFL1 family. In terms of assembly, catalytic component of the UFM1 ribosome E3 ligase (UREL) complex. Interacts with E2-like enzyme UFC1.

The protein resides in the endoplasmic reticulum membrane. The protein localises to the cytoplasm. It localises to the cytosol. Its subcellular location is the nucleus. It is found in the chromosome. In terms of biological role, E3 protein ligase that mediates ufmylation, the covalent attachment of the ubiquitin-like modifier UFM1 to lysine residues on target proteins, and which plays a key role in various processes, such as ribosome recycling, response to DNA damage, interferon response or reticulophagy (also called ER-phagy). As part of the UREL complex, plays a key role in ribosome recycling by catalyzing mono-ufmylation of RPL26/uL24 subunit of the 60S ribosome. Ufmylation of RPL26/uL24 occurs on free 60S ribosomes following ribosome dissociation: it weakens the junction between post-termination 60S subunits and SEC61 translocons, promoting release and recycling of the large ribosomal subunit from the endoplasmic reticulum membrane. Ufmylation of RPL26/uL24 and subsequent 60S ribosome recycling either take place after normal termination of translation or after ribosome stalling during cotranslational translocation at the endoplasmic reticulum. Involved in reticulophagy in response to endoplasmic reticulum stress by mediating ufmylation of proteins such as CYB5R3 and RPN1, thereby promoting lysosomal degradation of ufmylated proteins. Ufmylation in response to endoplasmic reticulum stress is essential for processes such as hematopoiesis, blood vessel morphogenesis or inflammatory response. This Gallus gallus (Chicken) protein is E3 UFM1-protein ligase 1.